A 1310-amino-acid chain; its full sequence is Vacuolating cytotoxin autotransporter (1310 aa).

The N-terminal stretch at Met1 to Ala30 is a signal peptide. A disordered region spans residues Pro339 to Ile364. The span at Asn350–Ile364 shows a compositional bias: polar residues. One can recognise an Autotransporter domain in the interval Lys1038–Phe1310.

The protein resides in the periplasm. It localises to the secreted. The protein localises to the cell surface. Its subcellular location is the cell outer membrane. In terms of biological role, induces vacuolation of eukaryotic cells. Causes ulceration and gastric lesions. This chain is Vacuolating cytotoxin autotransporter (vacA), found in Helicobacter pylori (Campylobacter pylori).